A 118-amino-acid polypeptide reads, in one-letter code: U-scoloptoxin(05)-Cw1a (118 aa).

An N-terminal signal peptide occupies residues 1-22 (MNPLNLSTFIVFTLFAASATTA).

It belongs to the scoloptoxin-05 family. Post-translationally, contains 5 disulfide bonds. As to expression, expressed by the venom gland.

It is found in the secreted. The protein is U-scoloptoxin(05)-Cw1a of Cormocephalus westwoodi (Westwood's green centipede).